The primary structure comprises 133 residues: Large ribosomal subunit protein uL16c (133 aa).

Belongs to the universal ribosomal protein uL16 family. In terms of assembly, part of the 50S ribosomal subunit.

It localises to the plastid. Its subcellular location is the chloroplast. The sequence is that of Large ribosomal subunit protein uL16c from Liriodendron tulipifera (Tuliptree).